The sequence spans 309 residues: MRENNQSSTLEFILLGVTGQQEQEDFFYILFLFIYPITLIGNLLIVLAICSDVHLHNPMYFLLANLSLVDIFFSSVTIPKMLANHLLGSKSISFGGCLTQMYFMIALGNTDSYILAAMAYDRAVAISRPLHYTTIMSPRSCIWLIAGSWVIGNANALPHTLLTASLSFCGNQEVANFYCDITPLLKLSCSDIHFHVKMMYLGVGIFSVPLLCIIVSYIRVFSTVFQVPSTKGVLKAFSTCGSHLTVVSLYYGTVMGMYFRPLTNYSLKDAVITVMYTAVTPMLNPFIYSLRNRDVKAALRKLFNKRISS.

The Extracellular segment spans residues M1–D25. N-linked (GlcNAc...) asparagine glycosylation is present at N5. The helical transmembrane segment at F26–I49 threads the bilayer. At C50–N57 the chain is on the cytoplasmic side. Residues P58 to P79 form a helical membrane-spanning segment. The Extracellular portion of the chain corresponds to K80–Q100. C97 and C189 are disulfide-bonded. A helical transmembrane segment spans residues M101–Y120. Residues D121 to R139 are Cytoplasmic-facing. The helical transmembrane segment at S140 to P158 threads the bilayer. Over H159–H195 the chain is Extracellular. A helical transmembrane segment spans residues V196–I218. Residues R219 to K235 are Cytoplasmic-facing. The chain crosses the membrane as a helical span at residues A236 to Y258. The Extracellular portion of the chain corresponds to F259–A270. N-linked (GlcNAc...) asparagine glycosylation occurs at N264. The helical transmembrane segment at V271–L290 threads the bilayer. At R291–S309 the chain is on the cytoplasmic side.

It belongs to the G-protein coupled receptor 1 family.

It is found in the cell membrane. Functionally, odorant receptor. The polypeptide is Olfactory receptor 1A1 (OR1A1) (Pan troglodytes (Chimpanzee)).